Reading from the N-terminus, the 187-residue chain is Ribosome-recycling factor (187 aa).

The protein belongs to the RRF family.

The protein resides in the cytoplasm. Responsible for the release of ribosomes from messenger RNA at the termination of protein biosynthesis. May increase the efficiency of translation by recycling ribosomes from one round of translation to another. This chain is Ribosome-recycling factor, found in Rhodopseudomonas palustris (strain BisB18).